The chain runs to 212 residues: uncharacterized protein (212 aa).

The first 18 residues, 1 to 18 (MQLTQVLAVAILAAGVSA), serve as a signal peptide directing secretion. A disordered region spans residues 108 to 180 (VSHNRVNAKQ…KDYGHKDYGH (73 aa)). The span at 117–180 (QRRDDKKDYG…KDYGHKDYGH (64 aa)) shows a compositional bias: basic and acidic residues. The segment at 120-210 (DDKKDYGKND…KDYGYKGYDD (91 aa)) is 15 X 5 AA tandem repeats of K-D-Y-G-H. Repeat 1 spans residues 123 to 127 (KDYGK). The stretch at 128 to 132 (NDYGK) is one 2; truncated repeat. Tandem repeats lie at residues 133-137 (KDYGK), 138-142 (KDYGK), and 143-147 (KDYGK). The 6; truncated repeat unit spans residues 148 to 152 (KEYDP). Tandem repeats lie at residues 166 to 170 (KDYGH), 171 to 175 (KDYGH), 176 to 180 (KDYGH), 181 to 185 (KDYGH), and 186 to 190 (KDYGH). One copy of the 12; truncated repeat lies at 191-195 (DDYGY). Residues 196–200 (KGYDD) form a 13; truncated repeat. Residues 201–205 (KDYGY) form a 14; truncated repeat. Residues 206–210 (KGYDD) form a 15; truncated repeat.

The protein resides in the secreted. This is an uncharacterized protein from Arthroderma benhamiae (strain ATCC MYA-4681 / CBS 112371) (Trichophyton mentagrophytes).